We begin with the raw amino-acid sequence, 196 residues long: Putative NADH dehydrogenase/NAD(P)H nitroreductase SGR_2476 (196 aa).

The protein belongs to the nitroreductase family. HadB/RutE subfamily. FMN is required as a cofactor.

The chain is Putative NADH dehydrogenase/NAD(P)H nitroreductase SGR_2476 from Streptomyces griseus subsp. griseus (strain JCM 4626 / CBS 651.72 / NBRC 13350 / KCC S-0626 / ISP 5235).